Here is a 156-residue protein sequence, read N- to C-terminus: D-aminoacyl-tRNA deacylase (156 aa).

Residues 142–143 (GP) carry the Gly-cisPro motif, important for rejection of L-amino acids motif.

The protein belongs to the DTD family. In terms of assembly, homodimer.

The protein resides in the cytoplasm. The enzyme catalyses glycyl-tRNA(Ala) + H2O = tRNA(Ala) + glycine + H(+). It carries out the reaction a D-aminoacyl-tRNA + H2O = a tRNA + a D-alpha-amino acid + H(+). An aminoacyl-tRNA editing enzyme that deacylates mischarged D-aminoacyl-tRNAs. Also deacylates mischarged glycyl-tRNA(Ala), protecting cells against glycine mischarging by AlaRS. Acts via tRNA-based rather than protein-based catalysis; rejects L-amino acids rather than detecting D-amino acids in the active site. By recycling D-aminoacyl-tRNA to D-amino acids and free tRNA molecules, this enzyme counteracts the toxicity associated with the formation of D-aminoacyl-tRNA entities in vivo and helps enforce protein L-homochirality. The chain is D-aminoacyl-tRNA deacylase from Delftia acidovorans (strain DSM 14801 / SPH-1).